The following is a 336-amino-acid chain: MVVKVGINGFGRIGRLAFRRIQNIEGVEVTRINDLTDPNMLAHLLKYDTTQGRFDGTVEVKEGGFEVNGNFIKVSAERDPENIDWATDGVEIVLEATGFFAKKEAAEKHLHTNGAKKVVITAPGGNDVKTVVFNTNHDILDGTETVISGASCTTNCLAPMAKALHDAFGIQKGLMTTIHAYTGDQMILDGPHRGGDLRRARAGAANIVPNSTGAAKAIGLVIPELNGKLDGAAQRVPVPTGSVTELVVTLDKNVSVDEINAAMKAASNDSFGYTEDPIVSSDIVGVSYGSLFDATQTKVMEVDGSQLVKVVSWYDNEMSYTAQLVRTLEYFAKIAK.

Residues 12-13 (RI), Asp-34, Arg-78, and Thr-121 contribute to the NAD(+) site. Residues 151–153 (SCT), Thr-182, Arg-199, 212–213 (TG), and Arg-235 each bind D-glyceraldehyde 3-phosphate. Cys-152 serves as the catalytic Nucleophile. Residue Asn-316 coordinates NAD(+).

It belongs to the glyceraldehyde-3-phosphate dehydrogenase family. In terms of assembly, homotetramer.

It is found in the cytoplasm. The enzyme catalyses D-glyceraldehyde 3-phosphate + phosphate + NAD(+) = (2R)-3-phospho-glyceroyl phosphate + NADH + H(+). It functions in the pathway carbohydrate degradation; glycolysis; pyruvate from D-glyceraldehyde 3-phosphate: step 1/5. In terms of biological role, catalyzes the oxidative phosphorylation of glyceraldehyde 3-phosphate (G3P) to 1,3-bisphosphoglycerate (BPG) using the cofactor NAD. The first reaction step involves the formation of a hemiacetal intermediate between G3P and a cysteine residue, and this hemiacetal intermediate is then oxidized to a thioester, with concomitant reduction of NAD to NADH. The reduced NADH is then exchanged with the second NAD, and the thioester is attacked by a nucleophilic inorganic phosphate to produce BPG. The sequence is that of Glyceraldehyde-3-phosphate dehydrogenase (gap) from Streptococcus pyogenes serotype M3 (strain ATCC BAA-595 / MGAS315).